We begin with the raw amino-acid sequence, 302 residues long: RELT-like protein 2 (302 aa).

A helical membrane pass occupies residues 15-35 (LYMLFLLVLVFFLMGLVGFMI). Disordered stretches follow at residues 47 to 68 (RTSR…DDVN), 135 to 164 (CSRS…TTVF), 177 to 212 (RYGL…GQPR), and 247 to 302 (VPCT…AGGM). Position 52 is a phosphoserine (serine 52). 2 stretches are compositionally biased toward basic and acidic residues: residues 148–158 (RSKEGKGRPRP) and 177–188 (RYGLHEHRDGSP). Positions 277–294 (QEANGQPTKLDTSGQQDS) are enriched in polar residues.

It belongs to the RELT family. Interacts with RELT, RELL1, OXSR1, PLSCR1 and TRAF2.

It is found in the cell membrane. Functionally, induces activation of MAPK14/p38 cascade, when overexpressed. Induces apoptosis, when overexpressed. The protein is RELT-like protein 2 (Rell2) of Rattus norvegicus (Rat).